The following is a 133-amino-acid chain: Putative esterase STK_17900 (133 aa).

Belongs to the thioesterase PaaI family.

The chain is Putative esterase STK_17900 from Sulfurisphaera tokodaii (strain DSM 16993 / JCM 10545 / NBRC 100140 / 7) (Sulfolobus tokodaii).